The primary structure comprises 510 residues: Probable lipid II flippase MurJ (510 aa).

12 helical membrane-spanning segments follow: residues 13–33, 81–101, 130–150, 154–174, 182–202, 240–260, 266–286, 315–335, 357–377, 396–416, 443–463, and 481–501; these read DVVIAHLIGAGAAADVFLFAN, GLVSIVTILAMVGSPHVAALF, FPYLWFVTFVAFSGAVLNTIG, VMSFSPVLLNIAMIATALFLA, LALAIGIFLGGLLQFLFQIPF, INLLLDTVIASFLMTGSISWL, LLEFPLGLFGIAISTVILPTL, IFLLGVPAAIGIAVLAQPMLL, AFNAGLLSFMLIKILANGYYA, MGFNLLAIPFSYVGLAIASAM, VFFVKVLLAAIAMGAAVWYYV, and LVWLIVLAAIVYGATLILLGV.

Belongs to the MurJ/MviN family.

The protein resides in the cell inner membrane. It participates in cell wall biogenesis; peptidoglycan biosynthesis. In terms of biological role, involved in peptidoglycan biosynthesis. Transports lipid-linked peptidoglycan precursors from the inner to the outer leaflet of the cytoplasmic membrane. The polypeptide is Probable lipid II flippase MurJ (Haemophilus influenzae (strain ATCC 51907 / DSM 11121 / KW20 / Rd)).